We begin with the raw amino-acid sequence, 440 residues long: Long-chain alkane monooxygenase (440 aa).

FMN-binding positions include Asp58, 137–138 (SH), Tyr158, and 227–230 (AGMS).

It belongs to the NtaA/SnaA/DszA monooxygenase family. Homodimer.

It localises to the secreted. It carries out the reaction a long-chain alkane + FMNH2 + O2 = a long chain fatty alcohol + FMN + H2O + H(+). In terms of biological role, involved in the degradation of long-chain alkanes. Converts alkanes ranging from C(15) to C(36) into their corresponding primary alcohols. This Geobacillus thermodenitrificans (strain NG80-2) protein is Long-chain alkane monooxygenase.